A 580-amino-acid polypeptide reads, in one-letter code: Long-chain-fatty-acid--AMP ligase FadD28 (580 aa).

The tract at residues 421 to 440 is disordered; it reads SERTFGGKIVTPSPGTPEGP.

It belongs to the ATP-dependent AMP-binding enzyme family.

The catalysed reaction is holo-[mycocerosate synthase] + a long-chain fatty acid + ATP = a long-chain fatty acyl-[mycocerosate synthase] + AMP + diphosphate. The enzyme catalyses a long-chain fatty acid + ATP + H(+) = a long-chain fatty acyl-AMP + diphosphate. It catalyses the reaction holo-[mycocerosate synthase] + a long-chain fatty acyl-AMP = a long-chain fatty acyl-[mycocerosate synthase] + AMP + H(+). Its pathway is lipid metabolism; fatty acid biosynthesis. Its function is as follows. Involved in the biosynthesis of phthiocerol dimycocerosate (PDIM), a cell wall-associated lipid found only in pathogenic mycobacteria. Catalyzes the activation of long-chain fatty acids as acyl-adenylates (acyl-AMP), which are then transferred to the multifunctional polyketide synthase Mas for further chain extension. The sequence is that of Long-chain-fatty-acid--AMP ligase FadD28 (fadD28) from Mycobacterium bovis (strain ATCC BAA-935 / AF2122/97).